The following is a 306-amino-acid chain: D-alanine--D-alanine ligase (306 aa).

Positions 101–303 (KLVWQALGLP…FSQLVARILM (203 aa)) constitute an ATP-grasp domain. 134–189 (VAKLGLPLIVKPSHEGSSVGMSKVDHASELQKALVEAFQHDSDVLIEKWLSGPEFT) lines the ATP pocket. Residues Asp257, Glu270, and Asn272 each contribute to the Mg(2+) site.

The protein belongs to the D-alanine--D-alanine ligase family. Mg(2+) is required as a cofactor. Mn(2+) serves as cofactor.

The protein localises to the cytoplasm. The catalysed reaction is 2 D-alanine + ATP = D-alanyl-D-alanine + ADP + phosphate + H(+). The protein operates within cell wall biogenesis; peptidoglycan biosynthesis. In terms of biological role, cell wall formation. This Yersinia pseudotuberculosis serotype O:1b (strain IP 31758) protein is D-alanine--D-alanine ligase.